We begin with the raw amino-acid sequence, 196 residues long: 3-isopropylmalate dehydratase small subunit (196 aa).

The protein belongs to the LeuD family. LeuD type 1 subfamily. In terms of assembly, heterodimer of LeuC and LeuD.

It catalyses the reaction (2R,3S)-3-isopropylmalate = (2S)-2-isopropylmalate. It functions in the pathway amino-acid biosynthesis; L-leucine biosynthesis; L-leucine from 3-methyl-2-oxobutanoate: step 2/4. Catalyzes the isomerization between 2-isopropylmalate and 3-isopropylmalate, via the formation of 2-isopropylmaleate. The polypeptide is 3-isopropylmalate dehydratase small subunit (Herpetosiphon aurantiacus (strain ATCC 23779 / DSM 785 / 114-95)).